A 1141-amino-acid chain; its full sequence is Eukaryotic translation initiation factor 3 subunit A (1141 aa).

Residues 319-501 form the PCI domain; it reads LQRMAAHVLL…NSIYFGTDLT (183 aa). 2 stretches are compositionally biased toward basic and acidic residues: residues 588–623 and 829–899; these read QNNA…EERE and AAEE…RGGD. Disordered stretches follow at residues 588-631 and 829-1141; these read QNNA…QNEI and AAEE…VKRR. At Ser908 the chain carries Phosphoserine. Basic and acidic residues-rich tracts occupy residues 920 to 976, 990 to 1051, 1059 to 1087, and 1110 to 1131; these read ERND…EPDT, SRDD…EPQR, DAPR…RGDQ, and TREE…KAGD.

It belongs to the eIF-3 subunit A family. As to quaternary structure, component of the eukaryotic translation initiation factor 3 (eIF-3) complex. The eIF-3 complex interacts with pix.

The protein localises to the cytoplasm. Its function is as follows. RNA-binding component of the eukaryotic translation initiation factor 3 (eIF-3) complex, which is involved in protein synthesis of a specialized repertoire of mRNAs and, together with other initiation factors, stimulates binding of mRNA and methionyl-tRNAi to the 40S ribosome. The eIF-3 complex specifically targets and initiates translation of a subset of mRNAs involved in cell proliferation. This is Eukaryotic translation initiation factor 3 subunit A from Drosophila sechellia (Fruit fly).